The chain runs to 188 residues: Peroxynitrite isomerase (188 aa).

Positions 35-41 match the GXWXGXG motif; sequence GTWRGEG. His178 is a heme b binding site.

Belongs to the nitrobindin family. As to quaternary structure, homodimer. It depends on heme b as a cofactor.

The enzyme catalyses peroxynitrite = nitrate. The protein operates within nitrogen metabolism. Heme-binding protein able to scavenge peroxynitrite and to protect free L-tyrosine against peroxynitrite-mediated nitration, by acting as a peroxynitrite isomerase that converts peroxynitrite to nitrate. Therefore, this protein likely plays a role in peroxynitrite sensing and in the detoxification of reactive nitrogen and oxygen species (RNS and ROS, respectively). Is able to bind nitric oxide (NO) in vitro, but may act as a sensor of peroxynitrite levels in vivo. This Frankia casuarinae (strain DSM 45818 / CECT 9043 / HFP020203 / CcI3) protein is Peroxynitrite isomerase.